We begin with the raw amino-acid sequence, 80 residues long: Cytochrome c oxidase subunit 7A1, mitochondrial (80 aa).

A mitochondrion-targeting transit peptide spans 1-21; sequence MRALRVSQALVRSFSSTARNR. The Mitochondrial matrix segment spans residues 22 to 46; sequence LENRVAEKQKIFQADNDLPVHLKGG. Residues 47 to 75 form a helical membrane-spanning segment; it reads ATDNILYRVTMTLCLGGTVYSLYCLGWAS. The Mitochondrial intermembrane portion of the chain corresponds to 76 to 80; sequence FPHKK.

This sequence belongs to the cytochrome c oxidase VIIa family. As to quaternary structure, component of the complex IV (CIV, cytochrome c oxidase), a multisubunit enzyme composed of 14 subunits. The complex is composed of a catalytic core of 3 subunits MT-CO1, MT-CO2 and MT-CO3, encoded in the mitochondrial DNA, and 11 supernumerary subunits COX4I1 (or COX4I2), COX5A, COX5B, COX6A2 (or COX6A1), COX6B1 (or COX6B2), COX6C, COX7A1 (or COX7A2), COX7B, COX7C, COX8B and NDUFA4, which are encoded in the nuclear genome. The complex exists as a monomer or a dimer and forms supercomplexes (SCs) in the inner mitochondrial membrane with NADH-ubiquinone oxidoreductase (complex I, CI) and ubiquinol-cytochrome c oxidoreductase (cytochrome b-c1 complex, complex III, CIII), resulting in different assemblies (supercomplex SCI(1)III(2)IV(1) and megacomplex MCI(2)III(2)IV(2)).

The protein resides in the mitochondrion inner membrane. The protein operates within energy metabolism; oxidative phosphorylation. Component of the mitochondrial respiratory complex IV (CIV, also named cytochrome c oxidase complex), the last enzyme in the mitochondrial electron transport chain which drives oxidative phosphorylation. The CIV complex is the component of the respiratory chain that catalyzes the reduction of oxygen to water. Acts as an assembly factor that specifically drives the homodimerization of CIV complexes, mediating the formation of mitochondrial respiratory supercomplexes (respirasomes) containing two CIV: supercomplxes with two molecules of CIV show improved activity. Despite being highly expressed in brown adipose tissue, not required for thermogenesis. The protein is Cytochrome c oxidase subunit 7A1, mitochondrial (COX7A1) of Sus scrofa (Pig).